Consider the following 608-residue polypeptide: Nuclear receptor subfamily 2 group C member 1 (608 aa).

The required for interaction with KAT2B stretch occupies residues 1 to 179 (MASIEEIAHQ…RLQRCIAFGM (179 aa)). The segment at residues 111 to 186 (FDLCVVCGDK…FGMKQDSVQC (76 aa)) is a DNA-binding region (nuclear receptor). 2 NR C4-type zinc fingers span residues 114 to 134 (CVVCGDKASGRHYGEVTCEGC) and 150 to 169 (CRGSKDCIINKHHRNRCQYC). Residues Ser-198 and Ser-216 each carry the phosphoserine modification. Thr-221 carries the post-translational modification Phosphothreonine. Phosphothreonine; by MAPK1 is present on Thr-223. Residue Lys-251 forms a Glycyl lysine isopeptide (Lys-Gly) (interchain with G-Cter in SUMO); alternate linkage. A Glycyl lysine isopeptide (Lys-Gly) (interchain with G-Cter in SUMO2); alternate cross-link involves residue Lys-251. The 243-residue stretch at 353 to 595 (GNVHLIAGDS…SVIPHILKME (243 aa)) folds into the NR LBD domain. Ser-586 is modified (phosphoserine; by PKC). The required for interaction with NRIP1 stretch occupies residues 589–608 (PHILKMEPADYNSQIIGHSI). Residue Lys-593 forms a Glycyl lysine isopeptide (Lys-Gly) (interchain with G-Cter in SUMO2) linkage.

This sequence belongs to the nuclear hormone receptor family. NR2 subfamily. In terms of assembly, homodimer. Heterodimer; with NR2C2 which is required for chromatin remodeling and for binding to promoter regions such as globin DR1 repeats. Interacts with ESR1; the interaction prevents homodimerization of ESR1 and suppresses its transcriptional activity and cell growth. Interacts with NRIP1 (via its LXXLL motifs); the interaction provides corepressor activity. Interacts with HDAC3 (via the DNA-binding domain); the interaction recruits phosphorylated NR2C1 to PML bodies for sumoylation. Interacts with HDAC4 (via the DNA-binding domain). Interacts with PIAS1; the interaction is required for sumoylation of NR2C1. Interacts with UBE2I; the interaction is required for sumoylation of NR2C1. Interacts with KAT2B; the interaction acts as a corepressor of gene expression. Sumoylation requires both PIAS1 and UBE2I. Sumoylation appears to dissociate NR2C1 from the PML nuclear bodies. Enhances the interaction with NRIP1 but inhibits interaction with KAT2B. In proliferating cells, stimulation by all-trans retinoic acid, activation of MAPK1-mediated phosphorylation and recruitment to PML bodies with subsequent sumoylation, suppresses OCT4 expression. Post-translationally, phosphorylated on several serine and threonine residues. Phosphorylation on Thr-223, stimulated by all-trans retinoic acid (atRA) mediates PML location and sumoylation in proliferating cells which then modulates its association with effector molecules, KAT2B and NRIP1. Phosphorylation on Ser-586 by PKC is important for protein stability and function as activator of RARB.

Its subcellular location is the nucleus. It localises to the PML body. Its function is as follows. Orphan nuclear receptor. Binds the IR7 element in the promoter of its own gene in an autoregulatory negative feedback mechanism. Primarily repressor of a broad range of genes including ESR1 and RARB. Together with NR2C2, forms the core of the DRED (direct repeat erythroid-definitive) complex that represses embryonic and fetal globin transcription. Binds to hormone response elements (HREs) consisting of two 5'-AGGTCA-3' half site direct repeat consensus sequences. Also activator of OCT4 gene expression. Plays a fundamental role in early embryogenesis and regulates embryonic stem cell proliferation and differentiation. Mediator of retinoic acid-regulated preadipocyte proliferation. This is Nuclear receptor subfamily 2 group C member 1 (NR2C1) from Bos taurus (Bovine).